Here is a 349-residue protein sequence, read N- to C-terminus: Interleukin-10 receptor subunit beta (349 aa).

Residues 1-19 form the signal peptide; it reads MAPCVAGWLGGFLLVPALG. The Extracellular segment spans residues 20–220; that stretch reads MIPPPEKVRM…RTGNDEITPS (201 aa). 2 consecutive Fibronectin type-III domains span residues 23–111 and 112–215; these read PPEK…VEDT and IIGP…TGND. A glycan (N-linked (GlcNAc...) asparagine) is linked at Asn-49. A disulfide bridge connects residues Cys-66 and Cys-74. N-linked (GlcNAc...) asparagine glycosylation is found at Asn-102, Asn-161, and Asn-199. The cysteines at positions 188 and 209 are disulfide-linked. Residues 221–241 form a helical membrane-spanning segment; that stretch reads WIVAIILIVSVLVVFLFLLGC. The Cytoplasmic portion of the chain corresponds to 242 to 349; sequence FVVLWLIYKK…PKLLTSTSEV (108 aa). The residue at position 299 (Ser-299) is a Phosphoserine. The interval 300–349 is disordered; it reads EESEGSKQSPEDNCASEPPSDPGPRELESKDEAPSPPHDDPKLLTSTSEV. Positions 322–341 are enriched in basic and acidic residues; sequence GPRELESKDEAPSPPHDDPK.

The protein belongs to the type II cytokine receptor family. Heterodimer with IFNLR1.

It is found in the membrane. Shared cell surface receptor required for the activation of five class 2 cytokines: IL10, IL22, IL26, IL28, and IFNL1. The IFNLR1/IL10RB dimer is a receptor for the cytokine ligands IFNL2 and IFNL3 and mediates their antiviral activity. The ligand/receptor complex stimulate the activation of the JAK/STAT signaling pathway leading to the expression of IFN-stimulated genes (ISG), which contribute to the antiviral state. The polypeptide is Interleukin-10 receptor subunit beta (Il10rb) (Mus musculus (Mouse)).